The sequence spans 267 residues: 4-hydroxy-tetrahydrodipicolinate reductase (267 aa).

Residues 9-14 and aspartate 35 each bind NAD(+); that span reads GAGGRM. Arginine 36 contributes to the NADP(+) binding site. NAD(+) contacts are provided by residues 99-101 and 123-126; these read GTT and AANY. Residue histidine 156 is the Proton donor/acceptor of the active site. Residue histidine 157 participates in (S)-2,3,4,5-tetrahydrodipicolinate binding. Lysine 160 (proton donor) is an active-site residue. 166–167 serves as a coordination point for (S)-2,3,4,5-tetrahydrodipicolinate; that stretch reads GT.

The protein belongs to the DapB family.

It is found in the cytoplasm. It catalyses the reaction (S)-2,3,4,5-tetrahydrodipicolinate + NAD(+) + H2O = (2S,4S)-4-hydroxy-2,3,4,5-tetrahydrodipicolinate + NADH + H(+). The enzyme catalyses (S)-2,3,4,5-tetrahydrodipicolinate + NADP(+) + H2O = (2S,4S)-4-hydroxy-2,3,4,5-tetrahydrodipicolinate + NADPH + H(+). It functions in the pathway amino-acid biosynthesis; L-lysine biosynthesis via DAP pathway; (S)-tetrahydrodipicolinate from L-aspartate: step 4/4. Its function is as follows. Catalyzes the conversion of 4-hydroxy-tetrahydrodipicolinate (HTPA) to tetrahydrodipicolinate. The protein is 4-hydroxy-tetrahydrodipicolinate reductase of Halorhodospira halophila (strain DSM 244 / SL1) (Ectothiorhodospira halophila (strain DSM 244 / SL1)).